We begin with the raw amino-acid sequence, 383 residues long: Glutamyl-tRNA reductase (383 aa).

Substrate is bound by residues 38-41 (TCNR), S82, 87-89 (EDQ), and Q93. Catalysis depends on C39, which acts as the Nucleophile. An NADP(+)-binding site is contributed by 161–166 (GAGEIA).

The protein belongs to the glutamyl-tRNA reductase family. Homodimer.

It catalyses the reaction (S)-4-amino-5-oxopentanoate + tRNA(Glu) + NADP(+) = L-glutamyl-tRNA(Glu) + NADPH + H(+). Its pathway is porphyrin-containing compound metabolism; protoporphyrin-IX biosynthesis; 5-aminolevulinate from L-glutamyl-tRNA(Glu): step 1/2. In terms of biological role, catalyzes the NADPH-dependent reduction of glutamyl-tRNA(Glu) to glutamate 1-semialdehyde (GSA). This Methanococcus aeolicus (strain ATCC BAA-1280 / DSM 17508 / OCM 812 / Nankai-3) protein is Glutamyl-tRNA reductase.